A 441-amino-acid chain; its full sequence is uncharacterized protein (441 aa).

An N-terminal signal peptide occupies residues 1-23 (MSRKYLLSLLLVGALVISVVASG). Cys24 is subject to N-acetylcysteine. Cys24 is lipidated: S-archaeol cysteine.

The protein belongs to the bacterial solute-binding protein 1 family.

It is found in the cell membrane. Functionally, probably part of a binding-protein-dependent transport system PH1214/15/16. This is an uncharacterized protein from Pyrococcus horikoshii (strain ATCC 700860 / DSM 12428 / JCM 9974 / NBRC 100139 / OT-3).